The chain runs to 241 residues: Carboxy-S-adenosyl-L-methionine synthase (241 aa).

Residues tyrosine 38, 63–65, 88–89, 116–117, asparagine 131, and arginine 198 each bind S-adenosyl-L-methionine; these read GCS, DN, and DI.

The protein belongs to the class I-like SAM-binding methyltransferase superfamily. Cx-SAM synthase family. In terms of assembly, homodimer.

The enzyme catalyses prephenate + S-adenosyl-L-methionine = carboxy-S-adenosyl-L-methionine + 3-phenylpyruvate + H2O. Functionally, catalyzes the conversion of S-adenosyl-L-methionine (SAM) to carboxy-S-adenosyl-L-methionine (Cx-SAM). The sequence is that of Carboxy-S-adenosyl-L-methionine synthase from Haemophilus influenzae (strain PittEE).